Here is a 142-residue protein sequence, read N- to C-terminus: Large ribosomal subunit protein uL11 (142 aa).

This sequence belongs to the universal ribosomal protein uL11 family. Part of the ribosomal stalk of the 50S ribosomal subunit. Interacts with L10 and the large rRNA to form the base of the stalk. L10 forms an elongated spine to which L12 dimers bind in a sequential fashion forming a multimeric L10(L12)X complex. In terms of processing, one or more lysine residues are methylated.

In terms of biological role, forms part of the ribosomal stalk which helps the ribosome interact with GTP-bound translation factors. The protein is Large ribosomal subunit protein uL11 of Rhodopseudomonas palustris (strain HaA2).